A 324-amino-acid chain; its full sequence is Elongation factor P--(R)-beta-lysine ligase (324 aa).

75–77 (SPE) serves as a coordination point for substrate. ATP-binding positions include 99 to 101 (RNQ) and N108. Y117 serves as a coordination point for substrate. An ATP-binding site is contributed by 243 to 244 (EL). A substrate-binding site is contributed by E250. G299 contributes to the ATP binding site.

Belongs to the class-II aminoacyl-tRNA synthetase family. EpmA subfamily. Homodimer.

The enzyme catalyses D-beta-lysine + L-lysyl-[protein] + ATP = N(6)-((3R)-3,6-diaminohexanoyl)-L-lysyl-[protein] + AMP + diphosphate + H(+). In terms of biological role, with EpmB is involved in the beta-lysylation step of the post-translational modification of translation elongation factor P (EF-P). Catalyzes the ATP-dependent activation of (R)-beta-lysine produced by EpmB, forming a lysyl-adenylate, from which the beta-lysyl moiety is then transferred to the epsilon-amino group of a conserved specific lysine residue in EF-P. The protein is Elongation factor P--(R)-beta-lysine ligase of Buchnera aphidicola subsp. Schizaphis graminum (strain Sg).